The following is a 410-amino-acid chain: Chaperone protein dnaJ 15 (410 aa).

Positions 17–82 constitute a J domain; the sequence is DPYEVLCVSK…EKRRHYDNAG (66 aa). A coiled-coil region spans residues 284-344; sequence AKTYEDTTEK…TVDELLKQRD (61 aa). The segment at 351 to 410 is disordered; the sequence is SVVKTPSGNNLSNGSSSKAQGDESKGDGDSAGEEGGTENRDKSKRKWFNLNLKGSDKKLG. A compositionally biased stretch (low complexity) spans 357–367; it reads SGNNLSNGSSS.

Belongs to the DnaJ family. B/II subfamily. As to expression, expressed at high levels in root cap, root tip meristematic region and elongation zones, and at lower levels in mature part of roots (at protein level). Constitutively expressed in seedlings, etiolated or not, roots, rosette leaves, cauline leaves, stems, flowers, siliques and pollen.

The protein resides in the cytoplasm. Its subcellular location is the cytoskeleton. It localises to the endoplasmic reticulum membrane. The protein localises to the golgi apparatus membrane. In terms of biological role, plays a continuous role in plant development probably in the structural organization of compartments. Seems to be involved in early gravitropic signal transduction within the gravity-perceiving cells (statocytes), where it influences pH changes and auxin distribution. Probably affects the localization and/or activity of auxin efflux carrier components (PIN proteins) or other proteins involved in lateral auxin transport. The polypeptide is Chaperone protein dnaJ 15 (ATJ15) (Arabidopsis thaliana (Mouse-ear cress)).